The sequence spans 85 residues: Senescence-associated and QQS-related protein (85 aa).

Over residues 1–24 (MSFRKVEKKPTEMGRNMTHEKSDS) the composition is skewed to basic and acidic residues. Disordered stretches follow at residues 1 to 35 (MSFRKVEKKPTEMGRNMTHEKSDSDSDNEGAPMTV) and 55 to 85 (SGKARSNYNLTGTAKGTGPINSFSRKHFPNY). Polar residues predominate over residues 58-77 (ARSNYNLTGTAKGTGPINSF).

Expressed predominantly within leaves and cotyledons vasculatures. Mainly observed in fully expanded leaves, at the base of mature inflorescences, in senescing leaves and cauline leaves, and, to a lower extent, in hypocotyls and rosette leaves prior to flowering.

Functionally, plays a role in carbon allocation, including during senescence and stresses, thus impacting starch accumulation. This is Senescence-associated and QQS-related protein from Arabidopsis thaliana (Mouse-ear cress).